We begin with the raw amino-acid sequence, 401 residues long: Jumonji C domain-containing protein 5 (401 aa).

Positions 255–401 (EYLAQHELFA…PSFSVSFWWE (147 aa)) constitute a JmjC domain. 3 residues coordinate Fe cation: His306, Asp308, and His385.

Fe(2+) serves as cofactor. Expressed in neurons close to the dorsal lateral neurons involved in circadian rhythm.

The protein resides in the nucleus. It localises to the nucleoplasm. It is found in the cytoplasm. It carries out the reaction L-arginyl-[protein] + 2-oxoglutarate + O2 = (3R)-3-hydroxy-L-arginyl-[protein] + succinate + CO2. Functionally, bifunctional enzyme that acts both as an endopeptidase and 2-oxoglutarate-dependent monooxygenase. May be involved in regulation of behavior and circadian rhythms. This is Jumonji C domain-containing protein 5 from Drosophila melanogaster (Fruit fly).